The following is an 83-amino-acid chain: Putative membrane protein insertion efficiency factor (83 aa).

It belongs to the UPF0161 family.

Its subcellular location is the cell inner membrane. Functionally, could be involved in insertion of integral membrane proteins into the membrane. The sequence is that of Putative membrane protein insertion efficiency factor from Pelagibacter ubique (strain HTCC1062).